The chain runs to 139 residues: Probable transcription termination protein NusA (139 aa).

Positions 97–139 (STVAYAEVDRADTGVAIGRDGETIETARRLAERQFDIDDIELA) constitute a KH domain.

It belongs to the NusA family.

It is found in the cytoplasm. In terms of biological role, participates in transcription termination. This is Probable transcription termination protein NusA from Halococcus morrhuae (Micrococcus morrhuae).